We begin with the raw amino-acid sequence, 569 residues long: Probable diguanylate cyclase DgcQ (569 aa).

2 helical membrane passes run 25-45 (LGPGHVVNLCFIVVLLFSTLL) and 365-385 (IALTLLWALFTTMLLISWYVI). Residues 433–568 (HPFSVIQVDL…GRNRVCASDN (136 aa)) enclose the GGDEF domain. D441 is a binding site for Mg(2+). The substrate site is built by N449, H454, and D458. E484 serves as a coordination point for Mg(2+). The Proton acceptor role is filled by E484.

Homodimer. The cofactor is Mg(2+).

It localises to the cell inner membrane. The enzyme catalyses 2 GTP = 3',3'-c-di-GMP + 2 diphosphate. It functions in the pathway glycan metabolism; bacterial cellulose biosynthesis. It participates in purine metabolism; 3',5'-cyclic di-GMP biosynthesis. Its function is as follows. Catalyzes the synthesis of cyclic-di-GMP (c-di-GMP) via the condensation of 2 GTP molecules. Cyclic-di-GMP is a second messenger which controls cell surface-associated traits in bacteria. Involved in the regulation of cellulose production. The sequence is that of Probable diguanylate cyclase DgcQ from Shigella sonnei (strain Ss046).